A 183-amino-acid chain; its full sequence is Glutathione-regulated potassium-efflux system ancillary protein KefG (183 aa).

The protein belongs to the NAD(P)H dehydrogenase (quinone) family. KefG subfamily. As to quaternary structure, interacts with KefB.

The protein resides in the cell inner membrane. The enzyme catalyses a quinone + NADH + H(+) = a quinol + NAD(+). The catalysed reaction is a quinone + NADPH + H(+) = a quinol + NADP(+). Its function is as follows. Regulatory subunit of a potassium efflux system that confers protection against electrophiles. Required for full activity of KefB. The sequence is that of Glutathione-regulated potassium-efflux system ancillary protein KefG from Salmonella paratyphi B (strain ATCC BAA-1250 / SPB7).